Consider the following 128-residue polypeptide: Glycine cleavage system H protein (128 aa).

The 83-residue stretch at 22–104 (AIVVGITDFA…YEEGWMITIE (83 aa)) folds into the Lipoyl-binding domain. An N6-lipoyllysine modification is found at lysine 63.

This sequence belongs to the GcvH family. The glycine cleavage system is composed of four proteins: P, T, L and H. (R)-lipoate serves as cofactor.

The glycine cleavage system catalyzes the degradation of glycine. The H protein shuttles the methylamine group of glycine from the P protein to the T protein. This Anaeromyxobacter dehalogenans (strain 2CP-1 / ATCC BAA-258) protein is Glycine cleavage system H protein.